Reading from the N-terminus, the 117-residue chain is DNA-directed RNA polymerase II subunit RPB11 (117 aa).

Methionine 1 carries the N-acetylmethionine modification.

Belongs to the archaeal Rpo11/eukaryotic RPB11/RPC19 RNA polymerase subunit family. Component of the RNA polymerase II (Pol II) core complex consisting of 12 subunits: a ten-subunit catalytic core composed of POLR2A/RPB1, POLR2B/RPB2, POLR2C/RPB3, POLR2I/RPB9, POLR2J/RPB11, POLR2E/RPABC1, POLR2F/RPABC2, POLR2H/RPABC3, POLR2K/RPABC4 and POLR2L/RPABC5 and a mobile stalk composed of two subunits POLR2D/RPB4 and POLR2G/RPB7, protruding from the core and functioning primarily in transcription initiation. Part of Pol II(G) complex, in which Pol II core associates with an additional subunit POLR2M; unlike conventional Pol II, Pol II(G) functions as a transcriptional repressor. Part of TBP-based Pol II pre-initiation complex (PIC), in which Pol II core assembles with general transcription factors and other specific initiation factors including GTF2E1, GTF2E2, GTF2F1, GTF2F2, TCEA1, ERCC2, ERCC3, GTF2H2, GTF2H3, GTF2H4, GTF2H5, GTF2A1, GTF2A2, GTF2B and TBP; this large multi-subunit PIC complex mediates DNA unwinding and targets Pol II core to the transcription start site where the first phosphodiester bond forms. Interacts with AATF. Interacts with PTPN6; this interaction promotes the recruitment of RNA pol II to the PCK1 promoter.

It is found in the nucleus. Its function is as follows. Core component of RNA polymerase II (Pol II), a DNA-dependent RNA polymerase which synthesizes mRNA precursors and many functional non-coding RNAs using the four ribonucleoside triphosphates as substrates. In Mus musculus (Mouse), this protein is DNA-directed RNA polymerase II subunit RPB11 (Polr2j).